The sequence spans 195 residues: Capsid protein (195 aa).

The segment at 148 to 195 (NAPILSTLPETTVVRRRGRSPRRRTPSPRRRRSQSPRRRRSASPASQC) is disordered. Basic residues predominate over residues 161–188 (VRRRGRSPRRRTPSPRRRRSQSPRRRRS). A phosphoserine; by host mark is found at Ser167, Ser174, and Ser182. The stretch at 167–172 (SPRRRT) is one 1; half-length repeat. The tract at residues 167 to 188 (SPRRRTPSPRRRRSQSPRRRRS) is 3 X 7 AA repeats of S-P-R-R-R-[PR]-S. The Bipartite nuclear localization signal signature appears at 170 to 187 (RRTPSPRRRRSQSPRRRR). Repeat copies occupy residues 174–180 (SPRRRRS) and 182–188 (SPRRRRS). The RNA binding stretch occupies residues 189 to 195 (ASPASQC).

The protein belongs to the orthohepadnavirus core antigen family. In terms of assembly, homodimerizes, then multimerizes. Interacts with cytosol exposed regions of viral L glycoprotein present in the reticulum-to-Golgi compartment. Interacts with human FLNB. Phosphorylated form interacts with host importin alpha; this interaction depends on the exposure of the NLS, which itself depends upon genome maturation and/or phosphorylation of the capsid protein. Interacts with host NUP153. Post-translationally, phosphorylated by host SRPK1, SRPK2, and maybe protein kinase C or GAPDH. Phosphorylation is critical for pregenomic RNA packaging. Protein kinase C phosphorylation is stimulated by HBx protein and may play a role in transport of the viral genome to the nucleus at the late step during the viral replication cycle.

It localises to the virion. The protein localises to the host cytoplasm. In terms of biological role, self assembles to form an icosahedral capsid. Most capsids appear to be large particles with an icosahedral symmetry of T=4 and consist of 240 copies of capsid protein, though a fraction forms smaller T=3 particles consisting of 180 capsid proteins. Entering capsids are transported along microtubules to the nucleus. Phosphorylation of the capsid is thought to induce exposure of nuclear localization signal in the C-terminal portion of the capsid protein that allows binding to the nuclear pore complex via the importin (karyopherin-) alpha and beta. Capsids are imported in intact form through the nuclear pore into the nuclear basket, where it probably binds NUP153. Only capsids that contain the mature viral genome can release the viral DNA and capsid protein into the nucleoplasm. Immature capsids get stuck in the basket. Capsids encapsulate the pre-genomic RNA and the P protein. Pre-genomic RNA is reverse-transcribed into DNA while the capsid is still in the cytoplasm. The capsid can then either be directed to the nucleus, providing more genomes for transcription, or bud through the endoplasmic reticulum to provide new virions. The polypeptide is Capsid protein (Hepatitis B virus genotype G (isolate United States/USG17/2002) (HBV-G)).